The following is a 283-amino-acid chain: MAHRGAHFAFRSRWQKTDDELCRHSMSFILHKAIRNDFFQSYLYLLEKIPLVKLYALTSQVINGEMQFYARAKLFYQEVPATEEGMMGNFIELSSPDIQASQKFLRKFVGGPGRAGTDCALDCGSGIGRVSKHVLLPVFNSVELVDMMESFLLEAQNYLQVKGDKVESYHCYSLQEFTPPFRRYDVIWIQWVSGHLTDKDLLAFLSRCRDGLKENGIIILKDNVAREGCILDLSDSSVTRDMDILRSLIRKSGLVVLGQEKQDGFPEQCIPVWMFALHSDRHS.

S-adenosyl-L-methionine contacts are provided by residues Gly-124, Arg-129, Asp-146, 174 to 175 (LQ), Gln-190, and His-195.

The protein belongs to the methyltransferase superfamily. NTM1 family.

It is found in the nucleus. It carries out the reaction N-terminal L-alanyl-L-prolyl-L-lysyl-[protein] + S-adenosyl-L-methionine = N-terminal N-methyl-L-alanyl-L-prolyl-L-lysyl-[protein] + S-adenosyl-L-homocysteine + H(+). It catalyses the reaction N-terminal L-prolyl-L-prolyl-L-lysyl-[protein] + S-adenosyl-L-methionine = N-terminal N-methyl-L-prolyl-L-prolyl-L-lysyl-[protein] + S-adenosyl-L-homocysteine + H(+). The catalysed reaction is N-terminal L-seryl-L-prolyl-L-lysyl-[protein] + S-adenosyl-L-methionine = N-terminal N-methyl-L-seryl-L-prolyl-L-lysyl-[protein] + S-adenosyl-L-homocysteine + H(+). In terms of biological role, alpha N-methyltransferase that methylates the N-terminus of target proteins containing the N-terminal motif [Ala/Pro/Ser]-Pro-Lys when the initiator Met is cleaved. Specifically catalyzes monomethylation of exposed alpha-amino group of Ala or Ser residue in the [Ala/Ser]-Pro-Lys motif and Pro in the Pro-Pro-Lys motif. Predominantly functions as a mono-methyltransferase but is also able to di-/tri-methylate the GPKRIA peptide and di-methylate the PPKRIA peptide (in vitro). May activate NTMT1 by priming its substrates for trimethylation. This is N-terminal Xaa-Pro-Lys N-methyltransferase 2 from Homo sapiens (Human).